An 864-amino-acid polypeptide reads, in one-letter code: Dynamin-1 (864 aa).

Residues 28–294 (DLDLPQIAVV…LTNHIRDTLP (267 aa)) enclose the Dynamin-type G domain. Positions 38 to 45 (GGQSAGKS) are G1 motif. 7 residues coordinate GDP: S41, G43, K44, S45, S46, R59, and G60. The G2 motif stretch occupies residues 64-66 (VTR). Position 80 is a phosphotyrosine (Y80). Y125 carries the 3'-nitrotyrosine; alternate modification. Position 125 is a phosphotyrosine; alternate (Y125). Positions 136-139 (DLPG) are G3 motif. Residues 205-208 (TKLD) form a G4 motif region. 6 residues coordinate GDP: K206, D208, D211, N236, R237, and Q239. The tract at residues 235 to 238 (VNRS) is G5 motif. Phosphoserine is present on residues S306 and S347. Phosphotyrosine is present on Y354. A Phosphoserine modification is found at S512. Residues 519 to 625 (LVIRKGWLTI…WKASFLRAGV (107 aa)) form the PH domain. The region spanning 659-750 (VETIRNLVDS…IIGDINTTTV (92 aa)) is the GED domain. The disordered stretch occupies residues 767–864 (SVPAGRRSPT…PESPRPPFDL (98 aa)). S774 is subject to Phosphoserine; by GSK3-beta. At S778 the chain carries Phosphoserine. At R796 the chain carries Omega-N-methylarginine. At S822 the chain carries Phosphoserine. Positions 825–843 (PFGPPPQVPSRPNRAPPGV) are enriched in pro residues. S851 and S857 each carry phosphoserine.

It belongs to the TRAFAC class dynamin-like GTPase superfamily. Dynamin/Fzo/YdjA family. As to quaternary structure, homodimer; homodimerization is mediated by the dynamin-type G domain which promotes assembly-stimulated GTPase activity. Homo-tetramer formed from two dimers in the absence of lipid. Oligomerizes into a helical polymer that self-assembles around the vesicle membrane, when associated to the menbrane through lipid binding. Interacts (via C-terminal proline-rich domain (PRD)) with SNX9 (via SH3 domain); this interaction allows regulation of DNM1 self-assembly during late stages of endocytic vesicle formation and supports DNM1's early functions in accelerating clathrin-coated pits (CCPs) maturation in non neuronals cell. Interacts (via C-terminal proline-rich domain (PRD)) with MYO1E (via SH3 domain); this interaction regulates receptor-mediated endocytosis. Interacts with SNX33 (via SH3 domain); this interaction decreases DNM1-dependent endocytosis. Interacts with DIAPH1. Interacts with GRB2 (via SH3 domain); this interaction mediates disassembly of DNM1 polymers, therefore modulates self-assembly. Forms a complex with BIN1 (via SH3 domain) and SH3GL2 (via SH3 domain). Forms a complex with SH3GL2 (via SH3 domain) and AMPH (via SH3 domain). Forms a complex with SH3GL2 (via SH3 domain) and SYNJ1. Interacts with AMPH. Interacts (via C-terminal proline-rich domain (PRD)) with SYT1; this interaction facilitates vesicle fission during clathrin-mediated endocytosis (CME). Interacts (via C-terminal proline-rich domain (PRD)) with PLCG1 (via SH3 domain); this interaction stimulates the release of GDP from DNM1 and enhances DNM1-dependent endocytosis. Interacts with SNPH; this interaction inhibits the binding of DNM1 to AMPH and DNM1-receptor-mediated endocytosis. Interacts with CAV1. Interacts with SH3GLB1 (via SH3 domain). Interacts with PACSIN1 (via SH3 domain), PACSIN2 (via SH3 domain) and PACSIN3 (via SH3 domain). Interacts with UNC119; this interaction decreases DNM1's GTPase activity and affects DNM1's interaction with AMPH. Interacts (GTP-bound form) with DNAJC6; this interaction allows clathrin-coated vesicle (CCV) formation at the plasma membrane. Phosphorylation at Ser-774 by GSK3B/GSK3-beta leads to inactivation of receptor-mediated endocytosis in non-neuronal cells. Dephosphorylation at Ser-774, through the EGFR downstream signaling, leads to activation and regulates early stages of clathrin-mediated endocytosis (CME). Phosphorylated by CDK5 leading to synaptic vesicle endocytosis (SVE) activation.

It is found in the cell membrane. The protein resides in the membrane. It localises to the clathrin-coated pit. Its subcellular location is the cytoplasmic vesicle. The protein localises to the presynapse. It is found in the secretory vesicle. The protein resides in the chromaffin granule. It carries out the reaction GTP + H2O = GDP + phosphate + H(+). With respect to regulation, GTPase activity is activated by 1-phosphatidyl-1D-myo-inositol 4,5-bisphosphate. GTPase activity is inhibited by the heterodimer G protein formed by GNB1 and GNG2 with an IC(50)=400 nM when DNM1 concentration is 5 nM. Catalyzes the hydrolysis of GTP and utilizes this energy to mediate vesicle scission and participates in many forms of endocytosis, such as clathrin-mediated endocytosis or synaptic vesicle endocytosis as well as rapid endocytosis (RE). Associates to the membrane, through lipid binding, and self-assembles into rings and stacks of interconnected rings through oligomerization to form a helical polymer around the vesicle membrane leading to constriction of invaginated coated pits around their necks. Self-assembly of the helical polymer induces membrane tubules narrowing until the polymer reaches a length sufficient to trigger GTP hydrolysis. Depending on the curvature imposed on the tubules, membrane detachment from the helical polymer upon GTP hydrolysis can cause spontaneous hemifission followed by complete fission. May play a role in regulating early stages of clathrin-mediated endocytosis in non-neuronal cells through its activation by dephosphorylation via the signaling downstream of EGFR. Controls vesicle size at a step before fission, during formation of membrane pits, at hippocampal synapses. Controls plastic adaptation of the synaptic vesicle recycling machinery to high levels of activity. Mediates rapid endocytosis (RE), a Ca(2+)-dependent and clathrin- and K(+)-independent process in chromaffin cells. Microtubule-associated force-producing protein involved in producing microtubule bundles and able to bind and hydrolyze GTP. Through its interaction with DNAJC6, acts during the early steps of clathrin-coated vesicle (CCV) formation. This Homo sapiens (Human) protein is Dynamin-1.